The primary structure comprises 254 residues: HLA class II histocompatibility antigen, DR alpha chain (254 aa).

The N-terminal stretch at 1-25 is a signal peptide; the sequence is MAISGVPVLGFFIIAVLMSAQESWA. The alpha-1 stretch occupies residues 26 to 109; sequence IKEEHVIIQA…KRSNYTPITN (84 aa). The Extracellular segment spans residues 26-216; that stretch reads IKEEHVIIQA…APSPLPETTE (191 aa). N-linked (GlcNAc...) asparagine glycans are attached at residues N103 and N143. An alpha-2 region spans residues 110-203; sequence VPPEVTVLTN…GLDEPLLKHW (94 aa). The Ig-like C1-type domain occupies 112–204; it reads PEVTVLTNSP…LDEPLLKHWE (93 aa). Cysteines 132 and 188 form a disulfide. Positions 204-216 are connecting peptide; the sequence is EFDAPSPLPETTE. The helical transmembrane segment at 217–239 threads the bilayer; the sequence is NVVCALGLTVGLVGIIIGTIFII. The Cytoplasmic segment spans residues 240–254; it reads KGLRKSNAAERRGPL. Residue K244 forms a Glycyl lysine isopeptide (Lys-Gly) (interchain with G-Cter in ubiquitin) linkage.

Belongs to the MHC class II family. In terms of assembly, heterotrimer that consists of an alpha chain HLA-DRA, a beta chain HLA-DRB and a peptide (peptide-MHCII). Newly synthesized alpha and beta chains forms a heterodimer (MHCII) that associates with the CD74/invariant chain (Ii) in the endoplasmic reticulum (ER). Ii is a trimer composed of three subunits and each subunit interacts with one MHCII dimer, blocking the peptide-binding cleft. As a result, MHCII molecules cannot bind peptides present in the ER. The complex of MHCII and CD74/Ii is transported in vesicles from ER to Golgi to lysosomes, where it encounters antigenic peptides generated via proteolysis of endocytosed antigens. MHCII dimers are dissociated from CD74/Ii by the combined action of proteolysis and HLA-DM. Lysosomal enzymes such as cathepsin, degrade CD74/Ii leaving a 24 amino acid remnant called class II-associated Ii or CLIP. Interacts (via the peptide binding cleft) with CLIP; this interaction inhibits antigen peptide binding before entry in the endosomal compartment. The displacement of CLIP and replacement by a high affinity peptide in lysosomes is performed by HLA-DM heterodimer. HLA-DM catalyzes CLIP dissociation from MHCII, stabilizes empty MHCII and mediates the selection of high affinity peptides. Interacts with HLA-DM heterodimer; this interaction is direct. Interacts (via alpha-1 domain) with TCR (via CDRs). Interacts (via alpha-2 domain) with CD4 (via Ig-like V-type domain); this interaction increases the affinity of TCR for peptide-MHCII. (Microbial infection) Interacts with Epstein-Barr virus BZLF2/gp42. As to quaternary structure, (Microbial infection) Interacts with Staphylococcus aureus enterotoxin A/entA, enterotoxin B/entB, enterotoxin C1/entC1, enterotoxin D/entD, and enterotoxin H/entH. Ubiquitinated by MARCHF1 or MARCHF8 at Lys-244 leading to down-regulation of MHCII. When associated with ubiquitination of the beta chain at 'Lys-254', the down-regulation of MHCII may be highly effective. As to expression, expressed in professional APCs: macrophages, dendritic cells and B cells (at protein level). Expressed in thymic epithelial cells (at protein level).

It is found in the cell membrane. Its subcellular location is the endoplasmic reticulum membrane. The protein localises to the early endosome membrane. It localises to the late endosome membrane. The protein resides in the lysosome membrane. It is found in the autolysosome membrane. Its function is as follows. An alpha chain of antigen-presenting major histocompatibility complex class II (MHCII) molecule. In complex with the beta chain HLA-DRB, displays antigenic peptides on professional antigen presenting cells (APCs) for recognition by alpha-beta T cell receptor (TCR) on HLA-DR-restricted CD4-positive T cells. This guides antigen-specific T-helper effector functions, both antibody-mediated immune response and macrophage activation, to ultimately eliminate the infectious agents and transformed cells. Typically presents extracellular peptide antigens of 10 to 30 amino acids that arise from proteolysis of endocytosed antigens in lysosomes. In the tumor microenvironment, presents antigenic peptides that are primarily generated in tumor-resident APCs likely via phagocytosis of apoptotic tumor cells or macropinocytosis of secreted tumor proteins. Presents peptides derived from intracellular proteins that are trapped in autolysosomes after macroautophagy, a mechanism especially relevant for T cell selection in the thymus and central immune tolerance. The selection of the immunodominant epitopes follows two processing modes: 'bind first, cut/trim later' for pathogen-derived antigenic peptides and 'cut first, bind later' for autoantigens/self-peptides. The anchor residue at position 1 of the peptide N-terminus, usually a large hydrophobic residue, is essential for high affinity interaction with MHCII molecules. The chain is HLA class II histocompatibility antigen, DR alpha chain (HLA-DRA) from Homo sapiens (Human).